Here is a 1036-residue protein sequence, read N- to C-terminus: Protein CLEC16A (1036 aa).

The region spanning 51 to 198 is the FPL domain; the sequence is IRSITEILIW…AVRTITLNVY (148 aa). Disordered regions lie at residues 375-416, 437-458, 876-967, and 1008-1036; these read SLEM…DAEK, GTSVQEQNTTDEEKSAATNSEN, HSSP…PSLL, and SQLPTLPAADTETPAEGAVNPEPAEPTEH. Over residues 381 to 392 the composition is skewed to basic residues; sequence HKGKKRMQKRPN. 3 stretches are compositionally biased toward low complexity: residues 877 to 891, 898 to 923, and 943 to 954; these read SSPSLSSPSPPFASG, STSHCDSGGSSSAPSATQSPADAPTT, and NSKPSKNSSARS.

Belongs to the CLEC16A/gop-1 family. As to quaternary structure, interacts with RNF41/NRDP1. As to expression, ubiquitously expressed. Expressed in pancreatic islets.

It is found in the endosome membrane. The protein localises to the lysosome membrane. Functionally, regulator of mitophagy through the upstream regulation of the RNF41/NRDP1-PRKN pathway. Mitophagy is a selective form of autophagy necessary for mitochondrial quality control. The RNF41/NRDP1-PRKN pathway regulates autophagosome-lysosome fusion during late mitophagy. May protect RNF41/NRDP1 from proteasomal degradation, RNF41/NRDP1 which regulates proteasomal degradation of PRKN. Plays a key role in beta cells functions by regulating mitophagy/autophagy and mitochondrial health. This is Protein CLEC16A from Mus musculus (Mouse).